The chain runs to 605 residues: Arginyl-tRNA--protein transferase 2 (605 aa).

Residues 496-513 (KVSSSSSSPQASETLLES) are compositionally biased toward low complexity. Positions 496-549 (KVSSSSSSPQASETLLESTSEHEDMEQGDTNDDDDEMYNSDEDSDSDSSSSRNR) are disordered. The segment covering 518 to 541 (EDMEQGDTNDDDDEMYNSDEDSDS) has biased composition (acidic residues).

Belongs to the R-transferase family.

It catalyses the reaction an N-terminal L-alpha-aminoacyl-[protein] + L-arginyl-tRNA(Arg) = an N-terminal L-arginyl-L-aminoacyl-[protein] + tRNA(Arg) + H(+). In terms of biological role, involved in the post-translational conjugation of arginine to the N-terminal aspartate or glutamate of a protein. This arginylation is required for degradation of the protein via the ubiquitin pathway. Component of the N-end rule pathway with ATE1 and PRT6. The N-end rule pathway regulates seed after-ripening, seedling sugar sensitivity, seedling lipid breakdown, and abscisic acid (ABA) sensitivity of germination. The end-rule pathway regulates various aspects of leaf and shoot development. Involved in the oxygen-dependent N-arginylation of RAP2-12, an activator of hypoxic gene expression. This N-terminal modification leads to ubiquitination by PRT6 and subsequent degradation of RAP2-12 under aerobic conditions. Involved in disease resistance. The end-rule pathway plays a role in regulating the timing and amplitude of the immune response following infection with the bacterial pathogen Pseudomonas syringae pv tomato. Regulates the biosynthesis of plant-defense metabolites such as glucosinolates, and the biosynthesis and response to the phytohormone jasmonate (JA), which plays a key role in plant immunity. The polypeptide is Arginyl-tRNA--protein transferase 2 (Arabidopsis thaliana (Mouse-ear cress)).